Here is a 1235-residue protein sequence, read N- to C-terminus: ATP-dependent helicase/nuclease subunit A (1235 aa).

A UvrD-like helicase ATP-binding domain is found at Arg4–Met470. Ala25–Thr32 provides a ligand contact to ATP. The region spanning Gln501–Gly795 is the UvrD-like helicase C-terminal domain.

Belongs to the helicase family. AddA subfamily. In terms of assembly, heterodimer of AddA and AddB/RexB. It depends on Mg(2+) as a cofactor.

It carries out the reaction Couples ATP hydrolysis with the unwinding of duplex DNA by translocating in the 3'-5' direction.. The catalysed reaction is ATP + H2O = ADP + phosphate + H(+). Functionally, the heterodimer acts as both an ATP-dependent DNA helicase and an ATP-dependent, dual-direction single-stranded exonuclease. Recognizes the chi site generating a DNA molecule suitable for the initiation of homologous recombination. The AddA nuclease domain is required for chi fragment generation; this subunit has the helicase and 3' -&gt; 5' nuclease activities. The sequence is that of ATP-dependent helicase/nuclease subunit A from Pediococcus pentosaceus (strain ATCC 25745 / CCUG 21536 / LMG 10740 / 183-1w).